The chain runs to 1123 residues: MPRAPRCRAVRALLRGRYREVLPLATFLRRLGPPGRLLVRRGDPAAFRALVAQCLVCVPWGARPPPAAPCFRQVSCLKELVARVVQRLCERGARNVLAFGFALLDGARGGPPVAFTTSVRSYLPNTVTETLRGSGAWGLLLRRVGDDVLTHLLARCALYLLVAPSCAYQVCGPPLYDLCAPASLPLPAPGLPGLPGLPGLGAGAGASADLRPTRQAQNSGARRRRGSPGSGVPLAKRPRRSVASEPERGAHRSFPRAQQPPVSEAPAVTPAVAASPAASWEGGPPGTRPTTPAWHPYPGPQGVPHDPAHPETKRFLYCSGGRERLRPSFLLSALPPTLSGARKLVETIFLGSAPQKPGAARRMRRLPARYWRMRPLFQELLGNHARCPYRALLRTHCPLRAMAAKEGSGNQAHRGVGICPLERPVAAPQEQTDSTRLVQLLRQHSSPWQVYAFLRACLCWLVPTGLWGSRHNQRRFLRNVKKFISLGKHAKLSLQELTWKMKVRDCTWLHGNPGACCVPAAEHRRREEILARFLVLVDGHIYVVKLLRSFFYVTETTFQKNRLFFYRKSVWSQLQSIGIRQLFNSVHLRELSEAEVRRHREARPALLTSRLRFLPKPSGLRPIVNMDYIMGARTFHRDKKVQHLTSQLKTLFSVLNYERARRPSLLGASMLGMDDIHRAWRTFVLRIRAQNPAPQLYFVKVDVTGAYDALPQDRLVEVIANVIRPQESTYCVRHYAVVQRTARGHVRKAFKRHVSTFADLQPYMRQFVERLQETSLLRDAVVIEQSSSLNEAGSSLFHLFLRLVHNHVVRIGGKSYIQCQGVPQGSILSTLLCSLCYGDMERRLFPGIEQDGVLLRLVDDFLLVTPHLTQAQAFLRTLVKGVPEYGCRANLQKTAVNFPVEDGALGSAAPLQLPAHCLFPWCGLLLDTRTLEVSCDYSSYAHTSIRASLTFSQGAKPGRNMRRKLLAVLRLKCCALFLDLQVNGIHTVYMNVYKIFLLQAYRFHACVLQLPFNQPVRKNPSFFLRVIADTASCCYSLLKARNAGLSLGAKGASGLFPSEAARWLCLHAFLLKLAHHSGTYRCLLGALQAAKAHLSRQLPRGTLAALEAAADPSLTADFKTILD.

An RNA-interacting domain 1 region spans residues 1–230; that stretch reads MPRAPRCRAV…ARRRRGSPGS (230 aa). The interval 58–197 is GQ motif; sequence VPWGARPPPA…APGLPGLPGL (140 aa). Residues 137-141 form a required for regulating specificity for telomeric DNA and for processivity for primer elongation region; sequence WGLLL. The segment at 202-311 is disordered; sequence AGAGASADLR…GVPHDPAHPE (110 aa). The short motif at 222–240 is the Bipartite nuclear localization signal element; it reads RRRRGSPGSGVPLAKRPRR. Ser227 is subject to Phosphoserine; by PKB/AKT1. The interval 231–308 is linker; the sequence is GVPLAKRPRR…GPQGVPHDPA (78 aa). Over residues 260–279 the composition is skewed to low complexity; it reads PPVSEAPAVTPAVAASPAAS. Positions 309-539 are RNA-interacting domain 2; that stretch reads HPETKRFLYC…LARFLVLVDG (231 aa). The TFLY; involved in RNA binding motif lies at 312-317; sequence TKRFLY. Residues 360–510 form a QFP motif region; it reads ARRMRRLPAR…MKVRDCTWLH (151 aa). The tract at residues 381–401 is CP motif; it reads LGNHARCPYRALLRTHCPLRA. Ser446 carries the phosphoserine; by DYRK2 modification. The 332-residue stretch at 595–926 folds into the Reverse transcriptase domain; sequence EVRRHREARP…CLFPWCGLLL (332 aa). Tyr697 is subject to Phosphotyrosine; by SRC-type Tyr-kinases. The Mg(2+) site is built by Asp702, Asp859, and Asp860. Positions 905 to 919 are required for oligomerization; it reads LGSAAPLQLPAHCLF. A primer grip sequence region spans residues 921–925; sequence WCGLL. Residues 927 to 1123 form a CTE region; the sequence is DTRTLEVSCD…LTADFKTILD (197 aa).

Belongs to the reverse transcriptase family. Telomerase subfamily. As to quaternary structure, catalytic component of the telomerase holoenzyme complex composed of one molecule of TERT, one molecule of WRAP53/TCAB1, two molecules of H/ACA ribonucleoprotein complex subunits DKC1, NOP10, NHP2 and GAR1, and a telomerase RNA template component (TERC). The telomerase holoenzyme complex is associated with TEP1, SMG6/EST1A and POT1. The molecular chaperone HSP90/P23 complex is required for correct assembly and stabilization of the active telomerase. Interacts directly with HSP90A and PTGES3. Interacts with HSPA1A; the interaction occurs in the absence of TERC and dissociates once the complex has formed. Interacts with RAN; the interaction promotes nuclear export of TERT. Interacts with XPO1. Interacts with PTPN11; the interaction retains TERT in the nucleus. Interacts with NCL (via RRM1 and C-terminal RRM4/Arg/Gly-rich domains); the interaction is important for nucleolar localization of TERT. Interacts with SMARCA4 (via the bromodomain); the interaction regulates Wnt-mediated signaling. Interacts with MCRS1 (isoform MCRS2); the interaction inhibits in vitro telomerase activity. Interacts with PIF1; the interaction has no effect on the elongation activity of TERT. Interacts with PML; the interaction recruits TERT to PML bodies and inhibits telomerase activity. Interacts with GNL3L. Interacts with isoform 1 and isoform 2 of NVL. Interacts with DHX36. Interacts with ATF7. In terms of processing, phosphorylation at Tyr-697 under oxidative stress leads to translocation of TERT to the cytoplasm and reduces its antiapoptotic activity. Dephosphorylated by SHP2/PTPN11 leading to nuclear retention. Phosphorylation at Ser-227 by the AKT pathway promotes nuclear location. Phosphorylation at the G2/M phase at Ser-446 by DYRK2 promotes ubiquitination by the EDVP complex and degradation. Ubiquitinated by the EDVP complex, a E3 ligase complex following phosphorylation at Ser-446 by DYRK2. Ubiquitinated leads to proteasomal degradation.

The protein resides in the nucleus. It localises to the nucleolus. The protein localises to the nucleoplasm. Its subcellular location is the chromosome. It is found in the telomere. The protein resides in the cytoplasm. It localises to the PML body. The catalysed reaction is DNA(n) + a 2'-deoxyribonucleoside 5'-triphosphate = DNA(n+1) + diphosphate. Its function is as follows. Telomerase is a ribonucleoprotein enzyme essential for the replication of chromosome termini in most eukaryotes. Active in progenitor and cancer cells. Inactive, or very low activity, in normal somatic cells. Catalytic component of the teleromerase holoenzyme complex whose main activity is the elongation of telomeres by acting as a reverse transcriptase that adds simple sequence repeats to chromosome ends by copying a template sequence within the RNA component of the enzyme. Catalyzes the RNA-dependent extension of 3'-chromosomal termini with the 6-nucleotide telomeric repeat unit, 5'-TTAGGG-3'. The catalytic cycle involves primer binding, primer extension and release of product once the template boundary has been reached or nascent product translocation followed by further extension. More active on substrates containing 2 or 3 telomeric repeats. Telomerase activity is regulated by a number of factors including telomerase complex-associated proteins, chaperones and polypeptide modifiers. Modulates Wnt signaling. Plays important roles in aging and antiapoptosis. The polypeptide is Telomerase reverse transcriptase (TERT) (Canis lupus familiaris (Dog)).